Reading from the N-terminus, the 555-residue chain is Bifunctional epoxide hydrolase 2 (555 aa).

The phosphatase stretch occupies residues 1-224; that stretch reads MTLRAAVFDL…KVTGIQLLNT (224 aa). 2 residues coordinate Mg(2+): aspartate 9 and aspartate 11. Lysine 43 is subject to N6-acetyllysine. N6-succinyllysine is present on lysine 55. 123 to 124 serves as a coordination point for phosphate; the sequence is TN. Aspartate 185 is a Mg(2+) binding site. N6-acetyllysine is present on residues lysine 191 and lysine 215. An epoxide hydrolase region spans residues 235-555; the sequence is SDMSHGYVTV…ARNPPVVSKM (321 aa). One can recognise an AB hydrolase-1 domain in the interval 259-531; that stretch reads PAVCLCHGFP…CGHWTQMDKP (273 aa). Residue aspartate 335 is the Nucleophile of the active site. Serine 370 is modified (phosphoserine). Tyrosine 383 is a substrate binding site. An N6-succinyllysine mark is found at lysine 421 and lysine 455. Tyrosine 466 acts as the Proton donor in catalysis. Residue cysteine 522 is the site of S-(15-deoxy-Delta12,14-prostaglandin J2-9-yl)cysteine attachment. Residue histidine 524 is the Proton acceptor of the active site. The Microbody targeting signal motif lies at 553 to 555; sequence SKM. Lysine 554 bears the N6-succinyllysine mark.

It belongs to the AB hydrolase superfamily. Epoxide hydrolase family. Homodimer. It depends on Mg(2+) as a cofactor. Post-translationally, the N-terminus is blocked. The covalent modification of cysteine by 15-deoxy-Delta12,14-prostaglandin-J2 is autocatalytic and reversible. It may occur as an alternative to other cysteine modifications, such as S-nitrosylation and S-palmitoylation.

It localises to the cytoplasm. The protein resides in the peroxisome. It catalyses the reaction an epoxide + H2O = an ethanediol. The catalysed reaction is (9S,10S)-10-hydroxy-9-(phosphooxy)octadecanoate + H2O = (9S,10S)-9,10-dihydroxyoctadecanoate + phosphate. The enzyme catalyses 12-phosphooxy-(9Z)-octadecenoate + H2O = 12-hydroxy-(9Z)-octadecenoate + phosphate. It carries out the reaction 12-phosphooxy-(9E)-octadecenoate + H2O = 12-hydroxy-(9E)-octadecenoate + phosphate. It catalyses the reaction 12-(phosphooxy)octadecanoate + H2O = 12-hydroxyoctadecanoate + phosphate. The catalysed reaction is 8,9-epoxy-(5Z,11Z,14Z)-eicosatrienoate + H2O = 8,9-dihydroxy-(5Z,11Z,14Z)-eicosatrienoate. The enzyme catalyses 11,12-epoxy-(5Z,8Z,14Z)-eicosatrienoate + H2O = 11,12-dihydroxy-(5Z,8Z,14Z)-eicosatrienoate. It carries out the reaction 14,15-epoxy-(5Z,8Z,11Z)-eicosatrienoate + H2O = 14,15-dihydroxy-(5Z,8Z,11Z)-eicosatrienoate. It catalyses the reaction 9,10-epoxy-(12Z)-octadecenoate + H2O = 9,10-dihydroxy-(12Z)-octadecenoate. The catalysed reaction is 8-hydroxy-(11S,12S)-epoxy-(5Z,9E,14Z)-eicosatrienoate + H2O = (8,11R,12S)-trihydroxy-(5Z,9E,14Z)-eicosatrienoate. The enzyme catalyses 10-hydroxy-(11S,12S)-epoxy- (5Z,8Z,14Z)-eicosatrienoate + H2O = (10,11S,12R)-trihydroxy-(5Z,8Z,14Z)-eicosatrienoate. It carries out the reaction 1-tetradecanoyl-sn-glycerol 3-phosphate + H2O = 1-tetradecanoyl-sn-glycerol + phosphate. It catalyses the reaction 1-octadecanoyl-sn-glycero-3-phosphate + H2O = 1-octadecanoyl-sn-glycerol + phosphate. The catalysed reaction is 1-(5Z,8Z,11Z,14Z-eicosatetraenoyl)-sn-glycero-3-phosphate + H2O = 1-(5Z,8Z,11Z,14Z-eicosatetraenoyl)-sn-glycerol + phosphate. The enzyme catalyses 1-hexadecanoyl-sn-glycero-3-phosphate + H2O = 1-hexadecanoyl-sn-glycerol + phosphate. It carries out the reaction 1-(9Z-octadecenoyl)-sn-glycero-3-phosphate + H2O = 1-(9Z-octadecenoyl)-sn-glycerol + phosphate. It catalyses the reaction (8S,9R)-epoxy-(5Z,11Z,14Z)-eicosatrienoate + H2O = (8S,9S)-dihydroxy-(5Z,11Z,14Z)-eicosatrienoate. The catalysed reaction is (11S,12R)-epoxy-(5Z,8Z,14Z)-eicosatrienoate + H2O = (11R,12R)-dihydroxy-(5Z,8Z,14Z)-eicosatrienoate. The enzyme catalyses (11S,12R)-epoxy-(5Z,8Z,14Z)-eicosatrienoate + H2O = (11S,12S)-dihydroxy-(5Z,8Z,14Z)-eicosatrienoate. It carries out the reaction (14S,15R)-epoxy-(5Z,8Z,11Z)-eicosatrienoate + H2O = (14R,15R)-dihydroxy-(5Z,8Z,11Z)-eicosatrienoate. It catalyses the reaction (14S,15R)-epoxy-(5Z,8Z,11Z)-eicosatrienoate + H2O = (14S,15S)-dihydroxy-(5Z,8Z,11Z)-eicosatrienoate. The catalysed reaction is (11R,12S)-epoxy-(5Z,8Z,14Z)-eicosatrienoate + H2O = (11S,12S)-dihydroxy-(5Z,8Z,14Z)-eicosatrienoate. The enzyme catalyses (11R,12S)-epoxy-(5Z,8Z,14Z)-eicosatrienoate + H2O = (11R,12R)-dihydroxy-(5Z,8Z,14Z)-eicosatrienoate. It carries out the reaction (8S,9R)-epoxy-(5Z,11Z,14Z)-eicosatrienoate + H2O = (8R,9R)-dihydroxy-(5Z,11Z,14Z)-eicosatrienoate. It catalyses the reaction (14R,15S)-epoxy-(5Z,8Z,11Z)-eicosatrienoate + H2O = (14R,15R)-dihydroxy-(5Z,8Z,11Z)-eicosatrienoate. With respect to regulation, inhibited by 1-(1-acetylpiperidin-4-yl)-3-(4-(trifl uoromethoxy)phenyl)urea (TPAU), 1-cyclohexyl-3-dodecylurea (CDU), 12-(3-adamantan-1-yl-ureido)-dodecanoic acid (AUDA), 1-((3S, 5S, 7S)-adamantan-1-yl)-3-(5-(2-(2-ethoxyethoxy) ethoxy)pentyl)urea (AEPU), N-adamantyl-N[']-cyclohexyl urea (ACU), 4-(((1S, 4S)-4-(3-((3S, 5S, 7S)-adamantan-1-yl) ureido)cyclohexyl)oxy)benzoic acid (c-AUCB), 4-(((1R, 4R)-4-(3-((3S, 5S, 7S)-adamantan-1-yl)ureido)cyclohexyl)oxy)benzoic acid (t-AUCB), 4-(((1R, 4R)-4-(3-(4(trifluoromethoxy)phenyl)ureido)cyclohexyl)oxy)benzoic acid (t-TAUCB) and to a lesser extent by 8-(3-((3S, 5S, 7S)-adamantan-1-yl)ureido) octanoic acid (AUOA). Phosphatase activity is inhibited by dodecyl-phosphate, phospholipids such as phospho-lysophosphatidic acids and fatty acids such as palmitic acid and lauric acid. Functionally, bifunctional enzyme. The C-terminal domain has epoxide hydrolase activity and acts on epoxides (alkene oxides, oxiranes) and arene oxides. Plays a role in xenobiotic metabolism by degrading potentially toxic epoxides. Also determines steady-state levels of physiological mediators. Its function is as follows. Bifunctional enzyme. The N-terminal domain has lipid phosphatase activity, with the highest activity towards threo-9,10-phosphonooxy-hydroxy-octadecanoic acid, followed by erythro-9,10-phosphonooxy-hydroxy-octadecanoic acid, 12-phosphonooxy-octadec-9Z-enoic acid and 12-phosphonooxy-octadec-9E-enoic acid. Has phosphatase activity toward lyso-glycerophospholipids with also some lower activity toward lysolipids of sphingolipid and isoprenoid phosphates. This is Bifunctional epoxide hydrolase 2 from Homo sapiens (Human).